Reading from the N-terminus, the 321-residue chain is L-carnitine dehydrogenase (321 aa).

14 to 19 (GSGVIG) provides a ligand contact to NAD(+). The segment at 317 to 321 (MTFSE) is important for catalytic activity.

It belongs to the 3-hydroxyacyl-CoA dehydrogenase family. L-carnitine dehydrogenase subfamily. In terms of assembly, homodimer.

It is found in the cytoplasm. It catalyses the reaction carnitine + NAD(+) = 3-dehydrocarnitine + NADH + H(+). It functions in the pathway amine and polyamine metabolism; carnitine metabolism. Its activity is regulated as follows. The enzyme activity is strongly inhibited by Ag(+), Ni(+), Hg(+), and p-chloromercuribenzoate, and partially inhibited by Li(+), Ca(2+), Mn(2+), Co(2+), Cu(2+), and Zn(2+). Catalyzes the NAD(+)-dependent oxidation of L-carnitine to 3-dehydrocarnitine. Is specific for L-carnitine and NAD(+) as substrates since D-carnitine, other carnitine analogs such as choline and betaine, and NADP(+) are not substrates. Despite a high similarity to 3-hydroxyacyl-CoA dehydrogenases, cannot dehydrogenate 3-hydroxybutylate and 3-hydroxybutyl-CoA. Is probably involved in a L-carnitine degradation pathway that allows Pseudomonas sp. strain NBRC 13558 to grow on L-carnitine as the sole source of carbon and nitrogen. This is L-carnitine dehydrogenase from Pseudomonas sp.